Here is a 153-residue protein sequence, read N- to C-terminus: Myosin regulatory light chain LC-2, mantle muscle (153 aa).

Ala-1 carries the post-translational modification Blocked amino end (Ala). EF-hand domains lie at 13 to 48 and 82 to 117; these read RQMQ…LGRV and DPED…MGDN. Residues Asp-26, Asp-28, Asp-30, and Asp-37 each coordinate Ca(2+).

Its function is as follows. In molluscan muscle, calcium regulation is associated with myosin rather than with actin. Muscle myosin contains two types of light chains: the catalytic light chain, essential for ATPase activity, and the regulatory light chain, a calcium-binding protein responsible for Ca(2+) dependent binding and Ca(2+) dependent Mg-ATPase activity. The sequence is that of Myosin regulatory light chain LC-2, mantle muscle from Todarodes pacificus (Japanese flying squid).